A 297-amino-acid chain; its full sequence is Mycothiol acetyltransferase (297 aa).

Glu-35 serves as a coordination point for 1D-myo-inositol 2-(L-cysteinylamino)-2-deoxy-alpha-D-glucopyranoside. 73–75 (MLV) serves as a coordination point for acetyl-CoA. Residues 155–297 (LRTFGGTEAE…VAVHAQYGIP (143 aa)) enclose the N-acetyltransferase domain. Positions 181, 222, and 230 each coordinate 1D-myo-inositol 2-(L-cysteinylamino)-2-deoxy-alpha-D-glucopyranoside. Acetyl-CoA-binding positions include 234–236 (LGV) and 241–247 (QGRGLGR). Tyr-268 provides a ligand contact to 1D-myo-inositol 2-(L-cysteinylamino)-2-deoxy-alpha-D-glucopyranoside.

The protein belongs to the acetyltransferase family. MshD subfamily. In terms of assembly, monomer.

The enzyme catalyses 1D-myo-inositol 2-(L-cysteinylamino)-2-deoxy-alpha-D-glucopyranoside + acetyl-CoA = mycothiol + CoA + H(+). In terms of biological role, catalyzes the transfer of acetyl from acetyl-CoA to desacetylmycothiol (Cys-GlcN-Ins) to form mycothiol. This Beutenbergia cavernae (strain ATCC BAA-8 / DSM 12333 / CCUG 43141 / JCM 11478 / NBRC 16432 / NCIMB 13614 / HKI 0122) protein is Mycothiol acetyltransferase.